Reading from the N-terminus, the 111-residue chain is uncharacterized protein (111 aa).

The interval 1-26 is disordered; the sequence is MDLKDGVEEEEGAGENGKGGTHAQRV.

This is an uncharacterized protein from Caenorhabditis elegans.